The following is a 323-amino-acid chain: Replication factor C subunit 4 (323 aa).

Residues Val-12, Val-24, 49 to 57 (GMPGIGKTT), Asn-145, and Arg-203 contribute to the ATP site.

This sequence belongs to the activator 1 small subunits family. In terms of assembly, replication factor C (RFC) is a heteropentamer of subunits RFC1, RFC2, RFC3, RFC4 and RFC5 and forms a complex with POL30/PCNA in the presence of ATP. Component of the RAD24-RFC complex which consists of RAD14, RFC2, RFC3, RFC4 and RFC5 and associates with the checkpoint clamp DDC1:MEC3:RAD17 complex. Component of the ELG1-RFC complex which consists of ELG1, RFC2, RFC3, RFC4 and RFC5. Component of the CTF18-RFC complex, which consists of CTF18, CTF8, DCC1, RFC2, RFC3, RFC4 and RFC5. RFC4 interacts with ECO1.

It localises to the nucleus. Its function is as follows. Component of ATP-dependent clamp loader (RFC and RFC-like) complexes for DNA clamps, such as the POL30/PCNA homotrimer and the checkpoint clamp DDC1:MEC3:RAD17 complex. During a clamp loading circle, the RFC:clamp complex binds to DNA and the recognition of the double-stranded/single-stranded junction stimulates ATP hydrolysis by RFC. The complex presumably provides bipartite ATP sites in which one subunit supplies a catalytic site for hydrolysis of ATP bound to the neighboring subunit. Dissociation of RFC from the clamp leaves the clamp encircling DNA. Component of the replication factor C (RFC or activator 1) complex which loads POL30/PCNA and acts during elongation of primed DNA templates by DNA polymerase delta and epsilon. RFC has an essential but redundant activity in sister chromatid cohesion establishment. Component of the RFC-like complex CTF18-RFC which is required for efficient establishment of chromosome cohesion during S-phase and may load or unload POL30/PCNA. Component of the RFC-like RAD24-RFC complex which loads the checkpoint clamp DDC1:MEC3:RAD17 complex and is involved in DNA repair pathways. Component of the RFC-like ELG1-RFC complex which appears to have a role in DNA replication, replication fork re-start, recombination and repair. This chain is Replication factor C subunit 4 (RFC4), found in Saccharomyces cerevisiae (strain ATCC 204508 / S288c) (Baker's yeast).